A 379-amino-acid chain; its full sequence is Leukocyte elastase inhibitor (379 aa).

N-acetylmethionine is present on Met1. An N6-acetyllysine mark is found at Lys137 and Lys177. Ser300 carries the phosphoserine modification. The CARD-binding motif (CBM) stretch occupies residues 351 to 379; that stretch reads NFTADHPFLFFIRHNSSGSILFLGRFSSP.

It belongs to the serpin family. Ov-serpin subfamily. As to quaternary structure, monomer. Interacts (via C-terminus) with CASP1; CASP4 (via CARD domain) and CASP5; these interactions regulate the activity of inflammatory caspases. Interacts with PRTN3. Interacts with GZMH. In terms of tissue distribution, in human bone marrow, present in all CD45+ populations. Expression levels are highest in the neutrophil lineage, intermediate in monocytic, and lowest in lymphocytic lineage. Within the neutrophil lineage, expression is highest in promyelocytes.

Its subcellular location is the secreted. The protein localises to the cytoplasm. The protein resides in the cytolytic granule. It localises to the early endosome. Functionally, neutrophil serine protease inhibitor that plays an essential role in the regulation of the innate immune response, inflammation and cellular homeostasis. Acts primarily to protect the cell from proteases released in the cytoplasm during stress or infection. These proteases are important in killing microbes but when released from granules, these potent enzymes also destroy host proteins and contribute to mortality. Regulates the activity of the neutrophil proteases elastase, cathepsin G, proteinase-3, chymase, chymotrypsin, and kallikrein-3. Also acts as a potent intracellular inhibitor of GZMH by directly blocking its proteolytic activity. During inflammation, limits the activity of inflammatory caspases CASP1, CASP4 and CASP5 by suppressing their caspase-recruitment domain (CARD) oligomerization and enzymatic activation. When secreted, promotes the proliferation of beta-cells via its protease inhibitory function. The chain is Leukocyte elastase inhibitor (SERPINB1) from Homo sapiens (Human).